Here is a 547-residue protein sequence, read N- to C-terminus: Chaperonin GroEL (547 aa).

ATP contacts are provided by residues 30 to 33 (TLGP), Lys51, 87 to 91 (DGTTT), Gly415, 479 to 481 (NAA), and Asp495.

The protein belongs to the chaperonin (HSP60) family. Forms a cylinder of 14 subunits composed of two heptameric rings stacked back-to-back. Interacts with the co-chaperonin GroES.

The protein resides in the cytoplasm. It catalyses the reaction ATP + H2O + a folded polypeptide = ADP + phosphate + an unfolded polypeptide.. Its function is as follows. Together with its co-chaperonin GroES, plays an essential role in assisting protein folding. The GroEL-GroES system forms a nano-cage that allows encapsulation of the non-native substrate proteins and provides a physical environment optimized to promote and accelerate protein folding. The sequence is that of Chaperonin GroEL from Pseudomonas syringae pv. tomato (strain ATCC BAA-871 / DC3000).